We begin with the raw amino-acid sequence, 303 residues long: UDP-N-acetylenolpyruvoylglucosamine reductase (303 aa).

The 191-residue stretch at 27–217 folds into the FAD-binding PCMH-type domain; it reads KVGGISQVFY…QTVRKLTQPI (191 aa). Arginine 175 is an active-site residue. Serine 224 functions as the Proton donor in the catalytic mechanism. Glutamate 294 is a catalytic residue.

It belongs to the MurB family. Requires FAD as cofactor.

The protein localises to the cytoplasm. The enzyme catalyses UDP-N-acetyl-alpha-D-muramate + NADP(+) = UDP-N-acetyl-3-O-(1-carboxyvinyl)-alpha-D-glucosamine + NADPH + H(+). It participates in cell wall biogenesis; peptidoglycan biosynthesis. Cell wall formation. The sequence is that of UDP-N-acetylenolpyruvoylglucosamine reductase from Orientia tsutsugamushi (strain Ikeda) (Rickettsia tsutsugamushi).